The sequence spans 225 residues: MSEDHFDDEHEGHGGGGGSRHPMAARFRGYLPVVVDVETGGFNSATDALLEIAAVTIGMDERGFVFPEHTYFFRVEPFEGANIEAAALEFTGIKLDHPLRMAVSEETAMNDIFRGVRKALKANGCKRAVLVGHNASFDLGFVNAAVARMDMKRNPFHPFSSFDTATLAGLAYGQTVLAKACQAAGIDFDGREAHSARYDTEKTAELFCGIVNRWKEMGGWEDFDD.

A disordered region spans residues 1–21 (MSEDHFDDEHEGHGGGGGSRH). An Exonuclease domain is found at 33-207 (VVVDVETGGF…YDTEKTAELF (175 aa)). Residues Asp-36, Glu-38, His-194, and Asp-199 each coordinate Mg(2+). His-194 (proton donor/acceptor) is an active-site residue.

The protein belongs to the RNase T family. In terms of assembly, homodimer. It depends on Mg(2+) as a cofactor.

Its function is as follows. Trims short 3' overhangs of a variety of RNA species, leaving a one or two nucleotide 3' overhang. Responsible for the end-turnover of tRNA: specifically removes the terminal AMP residue from uncharged tRNA (tRNA-C-C-A). Also appears to be involved in tRNA biosynthesis. The chain is Ribonuclease T from Pseudomonas savastanoi pv. phaseolicola (strain 1448A / Race 6) (Pseudomonas syringae pv. phaseolicola (strain 1448A / Race 6)).